A 546-amino-acid chain; its full sequence is MKILFATLLVVTTPHLVTGQIHWGNLSKIGVVGTGSASYKVMTQSSHQTLVIKLMPNITAIDNCTKTEIEEYKRLLGTVLQPIKVALNAITKNIKPIRSSTTSRRHRRFAGVALAGAALGVATAAQITAGIALHQSMMNTQAIESLKASLETTNQAIEEIRQAGQEMILAVQGVQDYINNELVPAMGQLSCDIVGQKLGLKLLRYYTEILSLFGPSLRDPISAEISIQALSYALGGDINKILEKLGYSGSDLLAILESKGIKAKITYVDIESYFIVLSIAYPSLSEIKGVIIHALEGVSYNIGSQEWYTTVPRYVATQGYLISNFDDTPCAFTPEGTICSQNALYPMSPLLQECFRGSTRSCARTLVSGSIGNRFILSKGNLIANCASILCKCYTTGSIISQDPDKILTYIAADQCPIVEVDGVTIQVGSREYPDAVYLHKIDLGPPISLEKLDVGTNLGNAVTKLEKAKDLLDSSDLILETIKGASVTNTGHILVGAGLIAVVGILIVTCCCRKRSNDSKVSTVILNPGLKPDLTGTSKSYVRSL.

Positions 1–19 (MKILFATLLVVTTPHLVTG) are cleaved as a signal peptide. Topologically, residues 20–491 (QIHWGNLSKI…TIKGASVTNT (472 aa)) are extracellular. N-linked (GlcNAc...) asparagine; by host glycans are attached at residues Asn-25, Asn-57, and Asn-63. Residues 109-133 (FAGVALAGAALGVATAAQITAGIAL) are fusion peptide. Positions 134 to 162 (HQSMMNTQAIESLKASLETTNQAIEEIRQ) form a coiled coil. Intrachain disulfides connect Cys-330-Cys-339, Cys-354-Cys-362, Cys-386-Cys-391, and Cys-393-Cys-416. Positions 458–483 (NLGNAVTKLEKAKDLLDSSDLILETI) form a coiled coil. A helical membrane pass occupies residues 492–512 (GHILVGAGLIAVVGILIVTCC). Over 513–546 (CRKRSNDSKVSTVILNPGLKPDLTGTSKSYVRSL) the chain is Cytoplasmic.

This sequence belongs to the paramyxoviruses fusion glycoprotein family. In terms of assembly, homotrimer of disulfide-linked F1-F2. The inactive precursor F0 is glycosylated and proteolytically cleaved into F1 and F2 to be functionally active. The cleavage is mediated by cellular proteases during the transport and maturation of the polypeptide.

The protein resides in the virion membrane. Its subcellular location is the host cell membrane. Its function is as follows. Class I viral fusion protein. Under the current model, the protein has at least 3 conformational states: pre-fusion native state, pre-hairpin intermediate state, and post-fusion hairpin state. During viral and plasma cell membrane fusion, the heptad repeat (HR) regions assume a trimer-of-hairpins structure, positioning the fusion peptide in close proximity to the C-terminal region of the ectodomain. The formation of this structure appears to drive apposition and subsequent fusion of viral and plasma cell membranes. Directs fusion of viral and cellular membranes leading to delivery of the nucleocapsid into the cytoplasm. This fusion is pH independent and occurs directly at the outer cell membrane. The trimer of F1-F2 (F protein) probably interacts with HN at the virion surface. Upon HN binding to its cellular receptor, the hydrophobic fusion peptide is unmasked and interacts with the cellular membrane, inducing the fusion between cell and virion membranes. Later in infection, F proteins expressed at the plasma membrane of infected cells could mediate fusion with adjacent cells to form syncytia, a cytopathic effect that could lead to tissue necrosis. This Rinderpest virus (strain Kabete O) (RDV) protein is Fusion glycoprotein F0 (F).